Consider the following 149-residue polypeptide: NADH-quinone oxidoreductase subunit I 1 (149 aa).

4Fe-4S ferredoxin-type domains follow at residues leucine 51 to threonine 82 and threonine 93 to glutamate 122. Residues cysteine 62, cysteine 65, cysteine 68, cysteine 72, cysteine 102, cysteine 105, cysteine 108, and cysteine 112 each contribute to the [4Fe-4S] cluster site.

The protein belongs to the complex I 23 kDa subunit family. In terms of assembly, NDH-1 is composed of 14 different subunits. Subunits NuoA, H, J, K, L, M, N constitute the membrane sector of the complex. It depends on [4Fe-4S] cluster as a cofactor.

The protein resides in the cell inner membrane. It catalyses the reaction a quinone + NADH + 5 H(+)(in) = a quinol + NAD(+) + 4 H(+)(out). Its function is as follows. NDH-1 shuttles electrons from NADH, via FMN and iron-sulfur (Fe-S) centers, to quinones in the respiratory chain. The immediate electron acceptor for the enzyme in this species is believed to be ubiquinone. Couples the redox reaction to proton translocation (for every two electrons transferred, four hydrogen ions are translocated across the cytoplasmic membrane), and thus conserves the redox energy in a proton gradient. This is NADH-quinone oxidoreductase subunit I 1 from Syntrophobacter fumaroxidans (strain DSM 10017 / MPOB).